Here is a 490-residue protein sequence, read N- to C-terminus: MKPKLMYQELKVPAEEPANELPMNEIEAWKAAEKKARWVLLVLILAVVGFGALMTQLFLWEYGDLHLFGPNQRPAPCYDPCEAVLVESIPEGLDFPNASTGNPSTSQAWLGLLAGAHSSLDIASFYWTLTNNDTHTQEPSAQQGEEVLRQLQTLAPKGVNVRIAVSKPNGPQPQADLQALLQSGAQVRMVDMQKLTHGVLHTKFWVVDQTHFYLGSANMDWRSLTQVKELGVVMYNCSCLARDLTKIFEAYWFLGQAGSSIPSTWPRFYDTRYNQETPMEICLNGTPALAYLASAPPPLCPSGRTPDLKALLNVVDNARSFIYVAVMNYLPTLEFSHPHRFWPAIDDGLRRAAYERGVKVRLLISCWGHSEPSMRAFLLSLAALRDNHTHSDIQVKLFVVPADEAQARIPYARVNHNKYMVTERATYIGTSNWSGNYFTETAGTSLLVTQNGRGGLRSQLEAIFLRDWDSPYSHDLDTSADSVGNACRLL.

The Cytoplasmic portion of the chain corresponds to 1 to 38 (MKPKLMYQELKVPAEEPANELPMNEIEAWKAAEKKARW). A helical; Signal-anchor for type II membrane protein membrane pass occupies residues 39–59 (VLLVLILAVVGFGALMTQLFL). The Lumenal portion of the chain corresponds to 60 to 490 (WEYGDLHLFG…DSVGNACRLL (431 aa)). 2 disulfides stabilise this stretch: Cys-77/Cys-239 and Cys-81/Cys-237. 2 N-linked (GlcNAc...) asparagine glycosylation sites follow: Asn-97 and Asn-132. Residues 196-223 (THGVLHTKFWVVDQTHFYLGSANMDWRS) form the PLD phosphodiesterase 1 domain. Residues His-201, Lys-203, and Asp-208 contribute to the active site. His-201 serves as the catalytic Proton donor. Phosphate-binding residues include His-201 and Lys-203. Asn-218 provides a ligand contact to phosphate. 3 N-linked (GlcNAc...) asparagine glycosylation sites follow: Asn-236, Asn-284, and Asn-387. A disulfide bond links Cys-366 and Cys-487. The 27-residue stretch at 411 to 437 (YARVNHNKYMVTERATYIGTSNWSGNY) folds into the PLD phosphodiesterase 2 domain. His-416 provides a ligand contact to phosphate. The active-site Nucleophile is the His-416. Phe-438 lines the Mg(2+) pocket.

The protein belongs to the phospholipase D family. In terms of assembly, homodimer. Interacts with APP. N-glycosylated. In terms of processing, proteolytically processed to a soluble form that is stable within endosomes and lysosomes. During transport through the secretory pathway becomes proteolysed by cysteine proteases, thereby releasing a stable soluble lysosomal lumenal polypeptide, whereas the transmembrane-bound fragment is rapidly degraded. Its transport route to lysosomes involves ubiquitination and the ESCRT complex. Post-translationally, ubiquitinated. Ubiquitination mediates sorting into lysosomes.

It is found in the endoplasmic reticulum membrane. It localises to the lysosome lumen. The protein localises to the early endosome membrane. Its subcellular location is the late endosome membrane. The protein resides in the golgi apparatus membrane. It is found in the endosome membrane. It carries out the reaction Exonucleolytic cleavage in the 5'- to 3'-direction to yield nucleoside 3'-phosphates.. It catalyses the reaction a 5'-end 5'-dephospho-ribonucleotidyl-ribonucleotide-RNA + H2O = a ribonucleoside 3'-phosphate + a 5'-end dephospho-ribonucleoside-RNA + H(+). The enzyme catalyses a ribonucleoside 3'-phosphate-2'-3'-cyclophospho-GMP + H2O = a ribonucleoside 3'-phosphate + 2',3'-cyclophospho-GMP + H(+). The catalysed reaction is a 5'-end 5'-dephospho-2'-deoxyribonucleotidyl-2'-deoxyribonucleotide in single-stranded DNA + H2O = a 5'-end dephospho-2'-deoxyribonucleoside in single-stranded DNA + a 2'-deoxyribonucleoside 3'-phosphate + H(+). It carries out the reaction a 5'-end 5'-phospho-2'-deoxyribonucleotide in single-stranded DNA + H2O = a 5'-end 5'-dephospho-2'-deoxyribonucleotide in single-stranded DNA + phosphate. It catalyses the reaction a 3-lyso-sn-glycero-1-phospho-(3'-acyl-1'-sn-glycerol) + a 1-acyl-sn-glycerol = a 3-acyl-sn-glycero-1-phospho-(3'-acyl-1'-sn-glycerol) + glycerol. The enzyme catalyses 3-lyso-sn-glycero-1-phospho-(3'-(9Z-octadecenoyl)-1'-sn-glycerol) + 1-(9Z-octadecenoyl)-sn-glycerol = 3-(9Z-octadecenoyl)-sn-glycero-1-phospho-(3'-(9Z-octadecenoyl)-1'-sn-glycerol) + glycerol. 5'-&gt;3' exonuclease that hydrolyzes the phosphodiester bond of single-stranded DNA (ssDNA) and RNA molecules to form nucleoside 3'-monophosphates and 5'-end 5'-hydroxy deoxyribonucleotide/ribonucleotide fragments. Partially redundant with PLD4, can cleave all four nucleotides displaying higher efficiency for ssDNA and RNA fragments initiated with uridine and guanosine residues and lower efficiency for cytidine-initiated substrates. As a result, it does not always degrade polynucleotides to the single nucleotide level, it can stall at specific sites sparing certain fragments from exonucleolytic degradation. Processes self and pathogenic ssDNA and RNA molecules that reach the endolysosomal compartment via phagocytosis or autophagy and may serve as 'danger' signals for recognition by innate immune receptors such as toll-like receptors (TLRs). Degrades mitochondrial CpG-rich ssDNA fragments to prevent TLR9 activation and autoinflammatory response, but it can cleave viral RNA to generate ligands for TLR7 activation and initiate antiviral immune responses. In plasmacytoid dendritic cells, it cooperates with endonuclease RNASET2 to release 2',3'-cyclic guanosine monophosphate (2',3'-cGMP), a potent stimulatory ligand for TLR7. Produces 2',3'-cGMPs and cytidine-rich RNA fragments that occupy TLR7 ligand-binding pockets and trigger a signaling-competent state. Can exert polynucleotide phosphatase activity toward 5'-phosphorylated ssDNA substrates although at a slow rate. Transphosphatidylase that catalyzes the exchange with R to S stereo-inversion of the glycerol moiety between (S,R)-lysophosphatidylglycerol (LPG) and monoacylglycerol (MAG) substrates to yield (S,S)-bis(monoacylglycero)phosphate (BMP). Can synthesize a variety of (S,S)-BMPs representing the main phospholipid constituent of lysosomal intralumenal vesicle (ILV) membranes that bind acid hydrolases for lipid degradation. Regulates the homeostasis and interorganellar communication of the endolysosomal system with an overall impact on cellular removal of dysfunctional organelles via autophagy as well as proper protein and lipid turnover. May play a role in myotube formation in response to ER stress. The polypeptide is 5'-3' exonuclease PLD3 (PLD3) (Pongo abelii (Sumatran orangutan)).